Consider the following 353-residue polypeptide: Quinolinate synthase (353 aa).

Iminosuccinate-binding residues include histidine 47 and serine 68. Cysteine 113 serves as a coordination point for [4Fe-4S] cluster. Iminosuccinate-binding positions include 139–141 (YAN) and serine 156. Cysteine 200 is a binding site for [4Fe-4S] cluster. Residues 226 to 228 (HPE) and threonine 243 contribute to the iminosuccinate site. Cysteine 297 contributes to the [4Fe-4S] cluster binding site.

The protein belongs to the quinolinate synthase family. Type 1 subfamily. The cofactor is [4Fe-4S] cluster.

It is found in the cytoplasm. The enzyme catalyses iminosuccinate + dihydroxyacetone phosphate = quinolinate + phosphate + 2 H2O + H(+). It participates in cofactor biosynthesis; NAD(+) biosynthesis; quinolinate from iminoaspartate: step 1/1. Functionally, catalyzes the condensation of iminoaspartate with dihydroxyacetone phosphate to form quinolinate. The chain is Quinolinate synthase from Yersinia pestis bv. Antiqua (strain Nepal516).